Here is a 303-residue protein sequence, read N- to C-terminus: Ribonuclease HIII (303 aa).

The region spanning 89 to 303 is the RNase H type-2 domain; sequence WSVLGSDEVG…ANTKKAERLL (215 aa). Residues Asp-95, Glu-96, and Asp-199 each coordinate a divalent metal cation.

It belongs to the RNase HII family. RnhC subfamily. It depends on Mn(2+) as a cofactor. The cofactor is Mg(2+).

It is found in the cytoplasm. The catalysed reaction is Endonucleolytic cleavage to 5'-phosphomonoester.. Functionally, endonuclease that specifically degrades the RNA of RNA-DNA hybrids. In Leuconostoc mesenteroides subsp. mesenteroides (strain ATCC 8293 / DSM 20343 / BCRC 11652 / CCM 1803 / JCM 6124 / NCDO 523 / NBRC 100496 / NCIMB 8023 / NCTC 12954 / NRRL B-1118 / 37Y), this protein is Ribonuclease HIII.